Reading from the N-terminus, the 392-residue chain is Erythronate-4-phosphate dehydrogenase (392 aa).

Substrate-binding residues include S48 and T69. An NAD(+)-binding site is contributed by D149. The active site involves R215. Residue D239 coordinates NAD(+). E244 is a catalytic residue. The active-site Proton donor is the H261. Residue G264 participates in NAD(+) binding. Residue Y265 coordinates substrate.

This sequence belongs to the D-isomer specific 2-hydroxyacid dehydrogenase family. PdxB subfamily. As to quaternary structure, homodimer.

Its subcellular location is the cytoplasm. It carries out the reaction 4-phospho-D-erythronate + NAD(+) = (R)-3-hydroxy-2-oxo-4-phosphooxybutanoate + NADH + H(+). The protein operates within cofactor biosynthesis; pyridoxine 5'-phosphate biosynthesis; pyridoxine 5'-phosphate from D-erythrose 4-phosphate: step 2/5. In terms of biological role, catalyzes the oxidation of erythronate-4-phosphate to 3-hydroxy-2-oxo-4-phosphonooxybutanoate. The protein is Erythronate-4-phosphate dehydrogenase of Salinibacter ruber (strain DSM 13855 / M31).